Here is a 335-residue protein sequence, read N- to C-terminus: Dolichyl-diphosphooligosaccharide--protein glycosyltransferase subunit MAGT1 (335 aa).

Positions 1–29 are cleaved as a signal peptide; the sequence is MASPRWFWSVCAIAAVALLLVSKVPSASA. The Extracellular portion of the chain corresponds to 30 to 184; sequence QRKKEMVLSE…DVNIRVIRPP (155 aa). The Thioredoxin domain maps to 47–175; that stretch reads WANKRPVIRM…IARWIADRTD (129 aa). The N-linked (GlcNAc...) asparagine glycan is linked to Asn-71. A disulfide bond links Cys-87 and Cys-90. The helical transmembrane segment at 185-205 threads the bilayer; the sequence is NYAGPLMLGLLLAVIGGLVYL. The Cytoplasmic portion of the chain corresponds to 206-209; sequence RRSN. A helical membrane pass occupies residues 210–230; it reads MEFLFNKTGWAFAALCFVLAM. Residues 231–270 lie on the Extracellular side of the membrane; the sequence is TSGQMWNHIRGPPYAHKNPHTGHVNYIHGSSQAQFVAETH. Residues 271–291 form a helical membrane-spanning segment; that stretch reads IVLLFNGGVTLGMVLLCEAAT. Residues 292–300 are Cytoplasmic-facing; sequence SDMDIGKRR. Residues 301–321 form a helical membrane-spanning segment; that stretch reads MMCIAGIGLVVLFFSWMLSIF. Residues 322-335 are Extracellular-facing; the sequence is RSKYHGYPYSFLMS.

The protein belongs to the OST3/OST6 family. As to quaternary structure, accessory component of the STT3B-containing form of the oligosaccharyltransferase (OST) complex. OST exists in two different complex forms which contain common core subunits RPN1, RPN2, OST48, OST4, DAD1 and TMEM258, either STT3A or STT3B as catalytic subunits, and form-specific accessory subunits. OST can form stable complexes with the Sec61 complex or with both the Sec61 and TRAP complexes. The association of TUSC3 or MAGT1 with the STT3B-containing complex seems to be mutually exclusvice. As to expression, expressed at high levels in kidney, colon, heart and liver. Expressed at lower levels in intestine, spleen, brain and lung.

The protein localises to the cell membrane. Its subcellular location is the endoplasmic reticulum. The protein resides in the endoplasmic reticulum membrane. It participates in protein modification; protein glycosylation. Accessory component of the STT3B-containing form of the N-oligosaccharyl transferase (OST) complex which catalyzes the transfer of a high mannose oligosaccharide from a lipid-linked oligosaccharide donor to an asparagine residue within an Asn-X-Ser/Thr consensus motif in nascent polypeptide chains. Involved in N-glycosylation of STT3B-dependent substrates. Specifically required for the glycosylation of a subset of acceptor sites that are near cysteine residues; in this function seems to act redundantly with TUSC3. In its oxidized form proposed to form transient mixed disulfides with a glycoprotein substrate to facilitate access of STT3B to the unmodified acceptor site. Also has oxidoreductase-independent functions in the STT3B-containing OST complex possibly involving substrate recognition. Could indirectly play a role in Mg(2+) transport in epithelial cells. The polypeptide is Dolichyl-diphosphooligosaccharide--protein glycosyltransferase subunit MAGT1 (Mus musculus (Mouse)).